The primary structure comprises 547 residues: Methionine--tRNA ligase (547 aa).

The 'HIGH' region motif lies at proline 15–histidine 25. Residues cysteine 146, cysteine 149, cysteine 159, and cysteine 162 each coordinate Zn(2+). Residues lysine 332–serine 336 carry the 'KMSKS' region motif. Residue lysine 335 participates in ATP binding.

Belongs to the class-I aminoacyl-tRNA synthetase family. MetG type 1 subfamily. As to quaternary structure, monomer. Requires Zn(2+) as cofactor.

It is found in the cytoplasm. It carries out the reaction tRNA(Met) + L-methionine + ATP = L-methionyl-tRNA(Met) + AMP + diphosphate. Is required not only for elongation of protein synthesis but also for the initiation of all mRNA translation through initiator tRNA(fMet) aminoacylation. The polypeptide is Methionine--tRNA ligase (Baumannia cicadellinicola subsp. Homalodisca coagulata).